Consider the following 545-residue polypeptide: Phenylalanine--tRNA ligase beta subunit (545 aa).

The B5 domain maps to 268-343 (FLHKIQNVRE…MSIGYNNLEP (76 aa)). 4 residues coordinate Mg(2+): D321, D327, E330, and D331.

The protein belongs to the phenylalanyl-tRNA synthetase beta subunit family. Type 2 subfamily. In terms of assembly, tetramer of two alpha and two beta subunits. The cofactor is Mg(2+).

The protein localises to the cytoplasm. The enzyme catalyses tRNA(Phe) + L-phenylalanine + ATP = L-phenylalanyl-tRNA(Phe) + AMP + diphosphate + H(+). The chain is Phenylalanine--tRNA ligase beta subunit from Saccharolobus islandicus (strain Y.N.15.51 / Yellowstone #2) (Sulfolobus islandicus).